We begin with the raw amino-acid sequence, 243 residues long: Phomoidride biosynthesis cluster protein B (243 aa).

This sequence belongs to the tstB family.

In terms of biological role, phosphatidylethanolamine-binding protein; part of the gene cluster that mediates the biosynthesis of the antihypercholesterolemic agents phomoidrides which are dimeric anhydrides. Within the pathway, tstB is not essential for dimerization and its function has still to be determined. The pathway begins with the highly reducing polyketide synthase tstA that catalyzes the formation of a C12-fatty acyl-ACP, starting from one acetate and 5 malonate units. The hydrolase tstM is involved in the release of the C12-fatty acyl chain from phiA. The alkylcitrate synthase (ACS) tstJ and the alkylcitrate dehydratase (ACDH) tstI then give rise to decarboxylated monomeric anhydrides by coupling the C12-fatty acyl chain with oxalacetic acid. The cyclase tstC is responsible for the dimerization of the monomeric anhydrides which leads to the production of prephomoidride that contains the characteristic bicyclo[4.3.1]deca-1,6-diene system of phomoidrides. Iterative oxidation catalyzed by the alpha-ketoglutarate-dependent dioxygenase tstK produced then phomoidride A. Finally, the methyltransferase tstE converts phomoidride A to phomoidride B via an acetalization reaction. The phosphatidylethanolamine-binding protein tstB and tstN are not essential for dimerization and their functions have still to be determined. This Talaromyces stipitatus (strain ATCC 10500 / CBS 375.48 / QM 6759 / NRRL 1006) (Penicillium stipitatum) protein is Phomoidride biosynthesis cluster protein B.